We begin with the raw amino-acid sequence, 131 residues long: Peptide methionine sulfoxide reductase MsrB (131 aa).

The MsrB domain maps to D8–S130. 4 residues coordinate Zn(2+): C47, C50, C96, and C99. Residue C119 is the Nucleophile of the active site.

It belongs to the MsrB Met sulfoxide reductase family. It depends on Zn(2+) as a cofactor.

The catalysed reaction is L-methionyl-[protein] + [thioredoxin]-disulfide + H2O = L-methionyl-(R)-S-oxide-[protein] + [thioredoxin]-dithiol. This is Peptide methionine sulfoxide reductase MsrB from Alkalilimnicola ehrlichii (strain ATCC BAA-1101 / DSM 17681 / MLHE-1).